A 461-amino-acid polypeptide reads, in one-letter code: ADP-specific phosphofructokinase (461 aa).

Residues Met-1–Glu-457 form the ADPK domain. Residues Glu-268, Glu-298, and Asp-441 each contribute to the Mg(2+) site. Catalysis depends on Asp-441, which acts as the Proton acceptor.

The protein belongs to the carbohydrate kinase PfkC family. Requires Mg(2+) as cofactor.

The protein resides in the cytoplasm. The enzyme catalyses beta-D-fructose 6-phosphate + ADP = beta-D-fructose 1,6-bisphosphate + AMP + H(+). It participates in carbohydrate degradation; glycolysis. Catalyzes the phosphorylation of fructose 6-phosphate to fructose 1,6-bisphosphate using ADP as the phosphate donor. The chain is ADP-specific phosphofructokinase from Thermococcus kodakarensis (strain ATCC BAA-918 / JCM 12380 / KOD1) (Pyrococcus kodakaraensis (strain KOD1)).